Reading from the N-terminus, the 1065-residue chain is MRRWGLWEQETNVHTVAESDNFQSFPDRVEILCLTGTESFDVKGQQLIKTLQKGFPTKFLSSQMSSKFGLAGGIPERRVRPIWDAIDSRQFKNALKLVTSLLAKYPKSPYALALKALIHERMGKTDEALSVCLDAKELLYKDDLALMDDLTLSTLQIVLQRLDHLDLATSCYAHACGKYPNNLELMMGLFNCYVREYSFVKQQQTAIKMYKLAGEERFLLWAVCSIQLQVLCDKSGEKLLLLAEGLLKKHIASHSMHEPEALMVYISLLEQQSKYNDALEVLSGDLGSLLMIEVDKLRIQGRLLARANDYSAAVDVYKKILELSPDDWECFLHYLGCLLEDDSIWKYFDNIDQIHPTKHIECKFSHLTEEMFDSRISSASDLVQKLQRDAENSNLRGPYLAELEIEKRKFLFGKKNEDKLLESLLQYFLKFGHLACYASDVEAYLQVLSPNKKAGFVEMLVKNSDSSASATKVLGQTTTILKVQELTGNIFGLPTDEIEASAVKLAKLYCQNLSLSKDLDPQESMFGEELLSLISNMLVQLFWRTRDFGYLAEAIMVLELGLTIRGHVWQYKILLLHIYSYVGALPLAFERYKALDVKNILTETVSHHILRQMLESPMWVDLSNLLKDYLKFMDDHLRESADLTFLAYRHRNYSKVIEFVLFKQRLQHSNQYQAARVEASVLQLKQNADSFEEEERILENLKSGVQLVELSNEIGSRTLKFNEDMQTRPWWTPCPEKNYLLGPFEEISYCPPKENVKEEREENMKRAIQRKSLLPRMIYLSIQCTPTALKESVETNGSGGDIDVCEELKCLLEDYTKMLGCSLSDAVEMITEISQGARTSESLGSNLVDWLNFAVFWNAWSLSSQEHWHVLNSLFERLILDRVRSMGSSDMSSCYSDVQVLVQIITEPLAWHSLIIQACTRSSLPSGKKKKKNQHSDQLSSSPISQAIKDSIQLLCSTIQDVSNWLLNQLNNPEDGQVEGFLTTLKRDGNAAGPGQILGVLESFIASSEESEVGNRIFQALKSWNTADTARKTVMAQQRVLREFLQICESKRKLLETLKQQMSHV.

Residues 294 to 327 (VDKLRIQGRLLARANDYSAAVDVYKKILELSPDD) form a TPR repeat.

This sequence belongs to the MDM20/NAA25 family. In terms of tissue distribution, ubiquitously expressed, with a higher expression in vascular bundles, hydathodes, leaf primordia and the base of the trichomes.

Its subcellular location is the cytoplasm. Functionally, auxiliary subunit of the NatB N-alpha-acetyltransferase complex. Required for flowering time regulation and for vegetative and reproductive plant development. In Arabidopsis thaliana (Mouse-ear cress), this protein is N-terminal acetyltransferase B complex auxiliary subunit NAA25.